A 423-amino-acid chain; its full sequence is Glutamate-1-semialdehyde 2,1-aminomutase (423 aa).

Lysine 262 carries the post-translational modification N6-(pyridoxal phosphate)lysine.

This sequence belongs to the class-III pyridoxal-phosphate-dependent aminotransferase family. HemL subfamily. In terms of assembly, homodimer. Requires pyridoxal 5'-phosphate as cofactor.

Its subcellular location is the cytoplasm. The enzyme catalyses (S)-4-amino-5-oxopentanoate = 5-aminolevulinate. It functions in the pathway porphyrin-containing compound metabolism; protoporphyrin-IX biosynthesis; 5-aminolevulinate from L-glutamyl-tRNA(Glu): step 2/2. The chain is Glutamate-1-semialdehyde 2,1-aminomutase from Saccharophagus degradans (strain 2-40 / ATCC 43961 / DSM 17024).